Consider the following 147-residue polypeptide: Ubiquitin-conjugating enzyme E2 D4 (147 aa).

A UBC core domain is found at M1–M147. The active-site Glycyl thioester intermediate is the C85.

Belongs to the ubiquitin-conjugating enzyme family. As to quaternary structure, interacts with map3k10/mlk2. As to expression, at embryonic stages 28 to 35, expressed in the somites, eye primordia, otic vesicle and branchial arches. By stage 35, also weakly expressed in the pronephros.

The catalysed reaction is S-ubiquitinyl-[E1 ubiquitin-activating enzyme]-L-cysteine + [E2 ubiquitin-conjugating enzyme]-L-cysteine = [E1 ubiquitin-activating enzyme]-L-cysteine + S-ubiquitinyl-[E2 ubiquitin-conjugating enzyme]-L-cysteine.. It participates in protein modification; protein ubiquitination. In terms of biological role, catalyzes the covalent attachment of ubiquitin to other proteins. Regulates pronephros development, possibly by promoting ubiquitination and thus inactivation or degradation of map3k10/mlk2. In Xenopus laevis (African clawed frog), this protein is Ubiquitin-conjugating enzyme E2 D4 (ube2d4).